Here is a 756-residue protein sequence, read N- to C-terminus: MSTESKCPFNHAAGGGTTNRDWWPKQLNLKILHQHSTLSDPMGENFDYAKEFKSLDIEAVKQDLRNVMTQSQDWWPADFGHYGPLFIRMAWHSAGTYRTGDGRGGAGAGQQRFAPLNSWPDNVSLDKARRLIWPVKQKYGRKISWADLIVLTGNVALESMGFKTFGFSGGRADVWEPEEDVYWGSETTWLGGEERYGAQKKMQQPGDGTLVAEPENHANEESRTASGERNLENPLAAVQMGLIYVNPEGPEGVPDPVASARDIRETFGRMAMNDEETVALIAGGHAFGKTHGAGPADNVGPEPEAAGLEEQGLGWRNKFGSGKGGDTITSGLEVTWTSTPTKWSNEYLENLFGFEWELTKSPAGAHQWTPKNGAGAGKIPDAHDPSKRHAPSMLTSDLALRFDPAYEQISRRFLNNPEQLADAFARAWFKLTHRDMGPLARYLGPETPAEELLWQDPIPSVDHALVDDQDVATLKAKILASGLSVSQLVSTAWAAASTFRGSDKRGGANGGRLRLAPQKDWAVNQPEQLAGVLKTLEGIQSEFNAAQSGGKKVSIADLIVLAGNAGVEQAAKNAGQHVTVPFAPGRADASQEQTDVESFSFLEPIADGFRNYQKGHYKVSAESLLVDKAQLLTLTAPEMTVLLGGLRVLNINVGQSKHGVFTDQPGTLTNDFFKNLLDMGVEWKATAGGTDTFEARDRKTGAVKWTGTRVDLVFGSHAQLRAISEVYGSSDAHEKFVKDFVAVWTKVMNLDRFDLA.

Residues 91–244 (WHSAGTYRTG…LAAVQMGLIY (154 aa)) constitute a cross-link (tryptophyl-tyrosyl-methioninium (Trp-Tyr) (with M-270)). Histidine 92 serves as the catalytic Proton acceptor. Positions 198–230 (AQKKMQQPGDGTLVAEPENHANEESRTASGERN) are disordered. Residues 214–223 (PENHANEESR) are compositionally biased toward basic and acidic residues. A cross-link (tryptophyl-tyrosyl-methioninium (Tyr-Met) (with W-91)) is located at residues 244–270 (YVNPEGPEGVPDPVASARDIRETFGRM). Residue histidine 285 coordinates heme b.

The protein belongs to the peroxidase family. Peroxidase/catalase subfamily. Homodimer or homotetramer. Requires heme b as cofactor. In terms of processing, formation of the three residue Trp-Tyr-Met cross-link is important for the catalase, but not the peroxidase activity of the enzyme.

The catalysed reaction is H2O2 + AH2 = A + 2 H2O. The enzyme catalyses 2 H2O2 = O2 + 2 H2O. In terms of biological role, bifunctional enzyme with both catalase and broad-spectrum peroxidase activity. This is Catalase-peroxidase from Pseudomonas syringae pv. syringae (strain B728a).